Reading from the N-terminus, the 114-residue chain is Iron-sulfur cluster insertion protein ErpA (114 aa).

Iron-sulfur cluster-binding residues include cysteine 42, cysteine 106, and cysteine 108.

It belongs to the HesB/IscA family. As to quaternary structure, homodimer. The cofactor is iron-sulfur cluster.

Its function is as follows. Required for insertion of 4Fe-4S clusters for at least IspG. The sequence is that of Iron-sulfur cluster insertion protein ErpA from Enterobacter sp. (strain 638).